Here is a 201-residue protein sequence, read N- to C-terminus: Adenylyl-sulfate kinase (201 aa).

Position 35-42 (35-42 (GLSGSGKS)) interacts with ATP. S109 acts as the Phosphoserine intermediate in catalysis.

Belongs to the APS kinase family.

It catalyses the reaction adenosine 5'-phosphosulfate + ATP = 3'-phosphoadenylyl sulfate + ADP + H(+). It participates in sulfur metabolism; hydrogen sulfide biosynthesis; sulfite from sulfate: step 2/3. In terms of biological role, catalyzes the synthesis of activated sulfate. The polypeptide is Adenylyl-sulfate kinase (Salmonella paratyphi C (strain RKS4594)).